Consider the following 372-residue polypeptide: Chaperone protein DnaJ (372 aa).

Residues 5-70 (DYYDLLEVGR…EKRAGYDRYG (66 aa)) form the J domain. Residues 134-212 (GIQAPIHYVT…CGGSGRRRDE (79 aa)) form a CR-type zinc finger. Zn(2+) is bound by residues C147, C150, C164, C167, C186, C189, C200, and C203. CXXCXGXG motif repeat units lie at residues 147 to 154 (CDTCQGTG), 164 to 171 (CHTCQGSG), 186 to 193 (CTTCYGEG), and 200 to 207 (CKKCGGSG).

Belongs to the DnaJ family. In terms of assembly, homodimer. Zn(2+) is required as a cofactor.

The protein resides in the cytoplasm. Participates actively in the response to hyperosmotic and heat shock by preventing the aggregation of stress-denatured proteins and by disaggregating proteins, also in an autonomous, DnaK-independent fashion. Unfolded proteins bind initially to DnaJ; upon interaction with the DnaJ-bound protein, DnaK hydrolyzes its bound ATP, resulting in the formation of a stable complex. GrpE releases ADP from DnaK; ATP binding to DnaK triggers the release of the substrate protein, thus completing the reaction cycle. Several rounds of ATP-dependent interactions between DnaJ, DnaK and GrpE are required for fully efficient folding. Also involved, together with DnaK and GrpE, in the DNA replication of plasmids through activation of initiation proteins. The chain is Chaperone protein DnaJ from Wolbachia sp. subsp. Drosophila simulans (strain wRi).